A 48-amino-acid polypeptide reads, in one-letter code: DNA gyrase inhibitor YacG (48 aa).

Zn(2+)-binding residues include Cys-9, Cys-12, Cys-28, and Cys-32.

It belongs to the DNA gyrase inhibitor YacG family. In terms of assembly, interacts with GyrB. It depends on Zn(2+) as a cofactor.

Its function is as follows. Inhibits all the catalytic activities of DNA gyrase by preventing its interaction with DNA. Acts by binding directly to the C-terminal domain of GyrB, which probably disrupts DNA binding by the gyrase. The polypeptide is DNA gyrase inhibitor YacG (Wigglesworthia glossinidia brevipalpis).